Reading from the N-terminus, the 297-residue chain is MSYGPQLPAFLMKGQIKENEVDDEAEEGAPQVYGPVIPGMEEPKNEKEKHDDQEETSVFGPSIPKEVREKLQNVENPAEDDEEDEEFPSQSYGPSIPSNFRPTVGPSIPGTFGDDSDEDIGPMPVAKGDEEKEAIDRAYRMVLQKEAEDDEKNFQPKREEWMTSVPKKLGNFGLGARTFKKGTTSERDASWEDAPGAKKRRNEETRSARSVGIAAADARQAAIVAEKTSGPSLLEIHQKKRDEKVKDAGYAQGERRPFDREKDMEVRGLKPGGSKEAVDRMKEFADRFANSKDQRFL.

Disordered regions lie at residues asparagine 19–glutamate 133, alanine 147–alanine 214, and glutamate 226–alanine 277. Over residues glutamate 41 to aspartate 52 the composition is skewed to basic and acidic residues. Acidic residues predominate over residues proline 77–phenylalanine 87. The segment covering proline 88–arginine 101 has biased composition (polar residues). Composition is skewed to basic and acidic residues over residues alanine 147 to tryptophan 161 and isoleucine 236 to glycine 268.

This is an uncharacterized protein from Caenorhabditis elegans.